Consider the following 183-residue polypeptide: MQQFDGTTIVSVRRGERVALGGDGQVTLGNIVIKATARKIRKLHGGKVLAGFAGGTADAFTLIERFEAKLQKHQGNLLVSAVELAKDWRTDRMLRRLEAMLIVADKDHTLIITGNGDVLEPEQGIAAIGSGGAFAQSAARALFENTDLAPEVVVKKSLEIAGDICIYTNHNHLIETLGPDDEA.

Residue Thr-7 is part of the active site. Positions 162, 165, and 168 each coordinate Na(+).

Belongs to the peptidase T1B family. HslV subfamily. As to quaternary structure, a double ring-shaped homohexamer of HslV is capped on each side by a ring-shaped HslU homohexamer. The assembly of the HslU/HslV complex is dependent on binding of ATP.

It is found in the cytoplasm. The enzyme catalyses ATP-dependent cleavage of peptide bonds with broad specificity.. Its activity is regulated as follows. Allosterically activated by HslU binding. Protease subunit of a proteasome-like degradation complex believed to be a general protein degrading machinery. The chain is ATP-dependent protease subunit HslV from Chromobacterium violaceum (strain ATCC 12472 / DSM 30191 / JCM 1249 / CCUG 213 / NBRC 12614 / NCIMB 9131 / NCTC 9757 / MK).